The sequence spans 489 residues: Cytochrome P450 2C3 (489 aa).

Cys434 is a binding site for heme.

Belongs to the cytochrome P450 family. The cofactor is heme.

The protein resides in the endoplasmic reticulum membrane. It is found in the microsome membrane. The enzyme catalyses an organic molecule + reduced [NADPH--hemoprotein reductase] + O2 = an alcohol + oxidized [NADPH--hemoprotein reductase] + H2O + H(+). Cytochromes P450 are a group of heme-thiolate monooxygenases. In liver microsomes, this enzyme is involved in an NADPH-dependent electron transport pathway. It oxidizes a variety of structurally unrelated compounds, including steroids, fatty acids, and xenobiotics. This is Cytochrome P450 2C3 (CYP2C3) from Oryctolagus cuniculus (Rabbit).